Here is an 824-residue protein sequence, read N- to C-terminus: MSLLGDPLQALPPSAAPTGPLLAPPAGATLNRLREPLLRRLSELLDQAPEGRGWRRLAELAGSRGRLRLSCLDLEQCSLKVLEPEGSPSLCLLKLMGEKGCTVTELSDFLQAMEHTEVLQLLSPPGIKITVNPESKAVLAGQFVKLCCRATGHPFVQYQWFKMNKEIPNGNTSELIFNAVHVKDAGFYVCRVNNNFTFEFSQWSQLDVCDIPESFQRSVDGVSESKLQICVEPTSQKLMPGSTLVLQCVAVGSPIPHYQWFKNELPLTHETKKLYMVPYVDLEHQGTYWCHVYNDRDSQDSKKVEIIIGRTDEAVECTEDELNNLGHPDNKEQTTDQPLAKDKVALLIGNMNYREHPKLKAPLVDVYELTNLLRQLDFKVVSLLDLTEYEMRNAVDEFLLLLDKGVYGLLYYAGHGYENFGNSFMVPVDAPNPYRSENCLCVQNILKLMQEKETGLNVFLLDMCRKRNDYDDTIPILDALKVTANIVFGYATCQGAEAFEIQHSGLANGIFMKFLKDRLLEDKKITVLLDEVAEDMGKCHLTKGKQALEIRSSLSEKRALTDPIQGTEYSAESLVRNLQWAKAHELPESMCLKFDCGVQIQLGFAAEFSNVMIIYTSIVYKPPEIIMCDAYVTDFPLDLDIDPKDANKGTPEETGSYLVSKDLPKHCLYTRLSSLQKLKEHLVFTVCLSYQYSGLEDTVEDKQEVNVGKPLIAKLDMHRGLGRKTCFQTCLMSNGPYQSSAATSGGAGHYHSLQDPFHGVYHSHPGNPSNVTPADSCHCSRTPDAFISSFAHHASCHFSRSNVPVETTDEIPFSFSDRLRISEK.

The interval 1–27 (MSLLGDPLQALPPSAAPTGPLLAPPAG) is disordered. Ser2 is subject to N-acetylserine. Residues 11 to 27 (LPPSAAPTGPLLAPPAG) show a composition bias toward low complexity. Residues 39–126 (RRLSELLDQA…EVLQLLSPPG (88 aa)) enclose the Death domain. Ig-like C2-type domains follow at residues 125–201 (PGIK…FEFS) and 212–305 (PESF…KKVE). At Ser135 the chain carries Phosphoserine. Cystine bridges form between Cys147–Cys190 and Cys248–Cys290. The segment at 348–562 (IGNMNYREHP…SLSEKRALTD (215 aa)) is caspase-like. The short motif at 369–376 (LTNLLRQL) is the Nuclear export signal element. Catalysis depends on residues His415 and Cys464.

This sequence belongs to the peptidase C14B family. In terms of assembly, homooligomer; forms oligomers which bind to TRAF6. Forms a complex with CARD14 and MALT1; resulting in the formation of a CBM (CARD14-BCL10-MALT1) complex. Forms a complex with CARD11 and MALT1; resulting in the formation of a CBM (CARD11-BCL10-MALT1) complex. Forms a complex with CARD9 and MALT1; resulting in the formation of a CBM (CARD9-BCL10-MALT1) complex. As to expression, highly expressed in peripheral blood mononuclear cells. Detected at lower levels in bone marrow, thymus and lymph node, and at very low levels in colon and lung.

Its subcellular location is the cytoplasm. It localises to the perinuclear region. The protein localises to the nucleus. In terms of biological role, protease that enhances BCL10-induced activation: acts via formation of CBM complexes that channel adaptive and innate immune signaling downstream of CARD domain-containing proteins (CARD9, CARD11 and CARD14) to activate NF-kappa-B and MAP kinase p38 pathways which stimulate expression of genes encoding pro-inflammatory cytokines and chemokines. Mediates BCL10 cleavage: MALT1-dependent BCL10 cleavage plays an important role in T-cell antigen receptor-induced integrin adhesion. Involved in the induction of T helper 17 cells (Th17) differentiation. Cleaves RC3H1 and ZC3H12A in response to T-cell receptor (TCR) stimulation which releases their cooperatively repressed targets to promote Th17 cell differentiation. Also mediates cleavage of N4BP1 in T-cells following TCR-mediated activation, leading to N4BP1 inactivation. May also have ubiquitin ligase activity: binds to TRAF6, inducing TRAF6 oligomerization and activation of its ligase activity. The polypeptide is Mucosa-associated lymphoid tissue lymphoma translocation protein 1 (Homo sapiens (Human)).